The following is a 205-amino-acid chain: Small ribosomal subunit protein uS4 (205 aa).

The segment at 14–49 is disordered; it reads RMGENIWGRPKSPVNRREYGPGQHGQRRKGKMSDFG. The 64-residue stretch at 94–157 folds into the S4 RNA-binding domain; that stretch reads SRLDAIVYRA…KQLVTVLEAV (64 aa).

This sequence belongs to the universal ribosomal protein uS4 family. As to quaternary structure, part of the 30S ribosomal subunit. Contacts protein S5. The interaction surface between S4 and S5 is involved in control of translational fidelity.

One of the primary rRNA binding proteins, it binds directly to 16S rRNA where it nucleates assembly of the body of the 30S subunit. In terms of biological role, with S5 and S12 plays an important role in translational accuracy. The protein is Small ribosomal subunit protein uS4 of Agrobacterium fabrum (strain C58 / ATCC 33970) (Agrobacterium tumefaciens (strain C58)).